A 416-amino-acid chain; its full sequence is Polyadenylation and cleavage factor homolog 1 (416 aa).

A compositionally biased stretch (polar residues) spans 1-17; that stretch reads MASNGSFSAQRNANART. The tract at residues 1–80 is disordered; sequence MASNGSFSAQ…NNNNVSRVSS (80 aa). Positions 70 to 80 are enriched in low complexity; that stretch reads SNNNNVSRVSS. A coiled-coil region spans residues 199 to 220; it reads KELTDLLSLLNNEKEKKTLEAS. A C2H2-type zinc finger spans residues 254–276; it reads RQCSSCGLRFKCQEEHSKHMDWH.

Forms a complex with cleavage and polyadenylation specificity factor (CPSF) subunits CLPS3, CLPS5, CPSF30, PCFS4, PCFS5, CSTF77 and FIPS3.

The protein resides in the nucleus. This chain is Polyadenylation and cleavage factor homolog 1, found in Arabidopsis thaliana (Mouse-ear cress).